The chain runs to 185 residues: HTH-type transcriptional regulator Hpr (185 aa).

The region spanning A13–G157 is the HTH marR-type domain. Residues I63–E86 constitute a DNA-binding region (H-T-H motif).

In terms of assembly, homodimer.

In terms of biological role, negative regulator of protease production and sporulation. This is HTH-type transcriptional regulator Hpr from Bacillus cereus (strain G9842).